The chain runs to 265 residues: Mlc titration factor A (265 aa).

Residues His111, His148, His152, and Glu211 each contribute to the Zn(2+) site.

It belongs to the MtfA family. As to quaternary structure, interacts with Mlc. The cofactor is Zn(2+).

The protein resides in the cytoplasm. Functionally, involved in the modulation of the activity of the glucose-phosphotransferase system (glucose-PTS). Interacts with the transcriptional repressor Mlc, preventing its interaction with DNA and leading to the modulation of expression of genes regulated by Mlc, including ptsG, which encodes the PTS system glucose-specific EIICB component. Its function is as follows. Shows zinc-dependent metallopeptidase activity. The protein is Mlc titration factor A of Escherichia coli O139:H28 (strain E24377A / ETEC).